We begin with the raw amino-acid sequence, 242 residues long: Zinc import ATP-binding protein ZnuC (242 aa).

Positions 24–241 constitute an ABC transporter domain; that stretch reads INVKNLSFFY…EKFLKMFSSY (218 aa). 56–63 is a binding site for ATP; that stretch reads GPNGGGKT.

It belongs to the ABC transporter superfamily. Zinc importer (TC 3.A.1.15.5) family. As to quaternary structure, the complex is composed of two ATP-binding proteins (ZnuC), two transmembrane proteins (ZnuB) and a solute-binding protein (ZnuA).

The protein resides in the cell inner membrane. It catalyses the reaction Zn(2+)(out) + ATP(in) + H2O(in) = Zn(2+)(in) + ADP(in) + phosphate(in) + H(+)(in). In terms of biological role, part of the ABC transporter complex ZnuABC involved in zinc import. Responsible for energy coupling to the transport system. The protein is Zinc import ATP-binding protein ZnuC of Ehrlichia canis (strain Jake).